The sequence spans 404 residues: Dihydrosphingosine 1-phosphate phosphatase YSR3 (404 aa).

The Lumenal portion of the chain corresponds to 1–86; sequence MTIIQTVTEL…PFRDVYFKYT (86 aa). The N-linked (GlcNAc...) asparagine glycan is linked to N62. Residues 87–107 form a helical membrane-spanning segment; sequence SLMGSHMFYVIVLPMPVWLGY. Topologically, residues 108 to 113 are cytoplasmic; sequence RDLTRD. A helical transmembrane segment spans residues 114-134; it reads MIYVLGYSIYLSGYLKDYWCL. The interval 129–137 is phosphatase sequence motif I; sequence KDYWCLPRP. The Lumenal segment spans residues 135–154; sequence PRPKSPPVDRITLSEYTTKE. Residues 155–176 traverse the membrane as a helical segment; that stretch reads YGAPSSHSANATAVSLLFFWRI. Residues 158 to 161 are phosphatase sequence motif II; the sequence is PSSH. Catalysis depends on H161, which acts as the Proton donor. The Cytoplasmic portion of the chain corresponds to 177-182; that stretch reads CLSDTL. A helical transmembrane segment spans residues 183-203; that stretch reads VWPTKLLLLSLVIFYYLTLVF. Residues 204–215 lie on the Lumenal side of the membrane; that stretch reads GRVYCGMHGMLD. The interval 204 to 215 is phosphatase sequence motif III; that stretch reads GRVYCGMHGMLD. The active-site Nucleophile is H211. A helical membrane pass occupies residues 216 to 236; the sequence is LFSGAAVGAICFFIRIWVVHA. At 237–241 the chain is on the cytoplasmic side; sequence LRNFQ. The helical transmembrane segment at 242–262 threads the bilayer; the sequence is IGEHLWFPLLSVAWGLFILFN. Over 263–319 the chain is Lumenal; that stretch reads HVRPIDECPCFEDSVAFIGVVSGLDCSDWLTERYGWNLVCSRYASCGSKVFLRPLVG. The helical transmembrane segment at 320-340 threads the bilayer; sequence VASVIVWKDVISKTAVYTLLI. Residues 341–379 are Cytoplasmic-facing; sequence KLLRFHDDRSEKVHFHNETSEEEECLLYSGVSKVEIVGR. Residues 380-400 traverse the membrane as a helical segment; the sequence is FLIYAGIPTTVFLLCPVFFTW. Over 401–404 the chain is Lumenal; that stretch reads TNLR.

This sequence belongs to the type 2 lipid phosphate phosphatase family.

Its subcellular location is the endoplasmic reticulum membrane. The enzyme catalyses sphinganine 1-phosphate + H2O = sphinganine + phosphate. Functionally, dihydrosphingosine 1-phosphate phosphatase required for efficient ceramide synthesis from exogenous sphingoid bases. Involved in endocytosis and calcium-mediated signaling. This chain is Dihydrosphingosine 1-phosphate phosphatase YSR3, found in Saccharomyces cerevisiae (strain ATCC 204508 / S288c) (Baker's yeast).